A 167-amino-acid polypeptide reads, in one-letter code: Insertion element IS1 protein InsB (167 aa).

Belongs to the transposase 27 family.

In terms of biological role, absolutely required for transposition of IS1. This is Insertion element IS1 protein InsB (insB) from Escherichia coli.